The primary structure comprises 373 residues: MARDFYEILGVSRSADAEELKRAYRRLARKYHPDVNKEPGAEEKFKEINRAYEVLSDPQARANYDRFGEAGVSGVGAAGFSDFGIGDMGGFADIFETFFGGFTTSSRRQQGPTRGEDLRYDLKLEFREAVFGGEKEIRINHLETCKTCQGTGAKPGTRPVTCSTCGGVGQVRRSARTPFGSFTQLTTCPTCGGSGVVIEDRCESCGGQGHIQVSKKLKITIPAGVDNGTRLRVSGEGDAGLRGGPPGDLYVYLFVQPDPEFQREGNNILSRIKISYLQAILGCRISVSTVDGEAELKIPAGTQPGTVLVLEGRGVPRVGNPVARGDHLITVDVEIPTHITHEERELLEKLAKIRGERLGKGGLEGFLGSLFGG.

Positions 4-68 (DFYEILGVSR…QARANYDRFG (65 aa)) constitute a J domain. The segment at 132 to 214 (GGEKEIRINH…CGGQGHIQVS (83 aa)) adopts a CR-type zinc-finger fold. Residues C145, C148, C162, C165, C188, C191, C202, and C205 each coordinate Zn(2+). CXXCXGXG motif repeat units lie at residues 145–152 (CKTCQGTG), 162–169 (CSTCGGVG), 188–195 (CPTCGGSG), and 202–209 (CESCGGQG).

It belongs to the DnaJ family. Homodimer. Zn(2+) serves as cofactor.

The protein resides in the cytoplasm. Participates actively in the response to hyperosmotic and heat shock by preventing the aggregation of stress-denatured proteins and by disaggregating proteins, also in an autonomous, DnaK-independent fashion. Unfolded proteins bind initially to DnaJ; upon interaction with the DnaJ-bound protein, DnaK hydrolyzes its bound ATP, resulting in the formation of a stable complex. GrpE releases ADP from DnaK; ATP binding to DnaK triggers the release of the substrate protein, thus completing the reaction cycle. Several rounds of ATP-dependent interactions between DnaJ, DnaK and GrpE are required for fully efficient folding. Also involved, together with DnaK and GrpE, in the DNA replication of plasmids through activation of initiation proteins. This Thermosynechococcus vestitus (strain NIES-2133 / IAM M-273 / BP-1) protein is Chaperone protein DnaJ.